Consider the following 469-residue polypeptide: Glutamate--tRNA ligase 1 (469 aa).

A 'HIGH' region motif is present at residues 10 to 20 (PSPTGYLHVGG). Positions 252 to 256 (KLSKR) match the 'KMSKS' region motif. K255 is a binding site for ATP.

This sequence belongs to the class-I aminoacyl-tRNA synthetase family. Glutamate--tRNA ligase type 1 subfamily. Monomer.

It localises to the cytoplasm. It catalyses the reaction tRNA(Glu) + L-glutamate + ATP = L-glutamyl-tRNA(Glu) + AMP + diphosphate. Its function is as follows. Catalyzes the attachment of glutamate to tRNA(Glu) in a two-step reaction: glutamate is first activated by ATP to form Glu-AMP and then transferred to the acceptor end of tRNA(Glu). The protein is Glutamate--tRNA ligase 1 of Fervidobacterium nodosum (strain ATCC 35602 / DSM 5306 / Rt17-B1).